The chain runs to 179 residues: Large ribosomal subunit protein uL6 (179 aa).

It belongs to the universal ribosomal protein uL6 family. As to quaternary structure, part of the 50S ribosomal subunit.

In terms of biological role, this protein binds to the 23S rRNA, and is important in its secondary structure. It is located near the subunit interface in the base of the L7/L12 stalk, and near the tRNA binding site of the peptidyltransferase center. The polypeptide is Large ribosomal subunit protein uL6 (Buchnera aphidicola subsp. Baizongia pistaciae (strain Bp)).